Here is a 331-residue protein sequence, read N- to C-terminus: Ketol-acid reductoisomerase (NADP(+)) (331 aa).

Residues 2 to 182 (AQLFYDTDAD…GGTRAGILET (181 aa)) form the KARI N-terminal Rossmann domain. NADP(+) is bound by residues 25 to 28 (YGSQ), Ser51, Ser53, and 83 to 86 (DEFQ). His108 is an active-site residue. An NADP(+)-binding site is contributed by Gly134. Residues 183–328 (NFKEETETDL…KGLRSMFSWL (146 aa)) enclose the KARI C-terminal knotted domain. Mg(2+) contacts are provided by Asp191, Glu195, Glu227, and Glu231. Ser252 serves as a coordination point for substrate.

This sequence belongs to the ketol-acid reductoisomerase family. It depends on Mg(2+) as a cofactor.

The enzyme catalyses (2R)-2,3-dihydroxy-3-methylbutanoate + NADP(+) = (2S)-2-acetolactate + NADPH + H(+). The catalysed reaction is (2R,3R)-2,3-dihydroxy-3-methylpentanoate + NADP(+) = (S)-2-ethyl-2-hydroxy-3-oxobutanoate + NADPH + H(+). Its pathway is amino-acid biosynthesis; L-isoleucine biosynthesis; L-isoleucine from 2-oxobutanoate: step 2/4. It participates in amino-acid biosynthesis; L-valine biosynthesis; L-valine from pyruvate: step 2/4. Involved in the biosynthesis of branched-chain amino acids (BCAA). Catalyzes an alkyl-migration followed by a ketol-acid reduction of (S)-2-acetolactate (S2AL) to yield (R)-2,3-dihydroxy-isovalerate. In the isomerase reaction, S2AL is rearranged via a Mg-dependent methyl migration to produce 3-hydroxy-3-methyl-2-ketobutyrate (HMKB). In the reductase reaction, this 2-ketoacid undergoes a metal-dependent reduction by NADPH to yield (R)-2,3-dihydroxy-isovalerate. The sequence is that of Ketol-acid reductoisomerase (NADP(+)) from Synechococcus sp. (strain WH7803).